The chain runs to 344 residues: Phenylalanine--tRNA ligase alpha subunit (344 aa).

Residue E256 participates in Mg(2+) binding.

Belongs to the class-II aminoacyl-tRNA synthetase family. Phe-tRNA synthetase alpha subunit type 1 subfamily. Tetramer of two alpha and two beta subunits. It depends on Mg(2+) as a cofactor.

The protein localises to the cytoplasm. It carries out the reaction tRNA(Phe) + L-phenylalanine + ATP = L-phenylalanyl-tRNA(Phe) + AMP + diphosphate + H(+). The sequence is that of Phenylalanine--tRNA ligase alpha subunit from Bacillus cereus (strain G9842).